A 279-amino-acid chain; its full sequence is Urease accessory protein UreD (279 aa).

This sequence belongs to the UreD family. In terms of assembly, ureD, UreF and UreG form a complex that acts as a GTP-hydrolysis-dependent molecular chaperone, activating the urease apoprotein by helping to assemble the nickel containing metallocenter of UreC. The UreE protein probably delivers the nickel.

The protein localises to the cytoplasm. Required for maturation of urease via the functional incorporation of the urease nickel metallocenter. This chain is Urease accessory protein UreD, found in Streptococcus salivarius (strain 57.I).